The primary structure comprises 393 residues: Double-stranded RNA-binding protein 5 (393 aa).

2 consecutive DRBM domains span residues 1–70 (MYKN…VLSS) and 87–155 (IYKN…SLKK). Disordered regions lie at residues 220-251 (ASSS…KSSK) and 335-371 (NPNL…QEKK). The span at 347 to 361 (VNEFTSSNNSCSVLN) shows a compositional bias: polar residues.

As to quaternary structure, heterodimer with DRB1, DRB2 or DRB4. Interacts with DCL1 and DCL3. As to expression, expressed in the shoot apical meristem (SAM).

Functionally, binds double-stranded RNA. May be involved in RNA-mediated silencing. The polypeptide is Double-stranded RNA-binding protein 5 (DRB5) (Arabidopsis thaliana (Mouse-ear cress)).